We begin with the raw amino-acid sequence, 479 residues long: F-box protein SKIP17 (479 aa).

Residues 92–138 form the F-box domain; the sequence is NSNSWSLPPELTIKVFSMLDTKSMMQAAVCCTMFNKCAMDRLCYSHI. The interval 435–479 is disordered; that stretch reads EMMEAEDDEVDEEDDSDDDTDDVSDEDESENDDDMGMGFDVDYLL. Positions 437–469 are enriched in acidic residues; the sequence is MEAEDDEVDEEDDSDDDTDDVSDEDESENDDDM.

As to quaternary structure, part of a SCF (ASK-cullin-F-box) protein ligase complex. Interacts with SPK1B/ASK2.

The protein resides in the nucleus. It functions in the pathway protein modification; protein ubiquitination. Functionally, component of SCF(ASK-cullin-F-box) E3 ubiquitin ligase complexes, which may mediate the ubiquitination and subsequent proteasomal degradation of target proteins. The sequence is that of F-box protein SKIP17 (SKIP17) from Arabidopsis thaliana (Mouse-ear cress).